The chain runs to 600 residues: MVSFTLRAIGACLIGLPALITAAPTSHVSNGFHVVEQLNGVPQGWVQEGSPAPSTQMKFKLALVQGKTAEFEQRVMDISNPKHADYGKFMSREELDAFLQPSSQVKDSVFNWLASEGISKRSVKSNTDWLTFTTSIATAEKLFNTRFYTFKNTADGSQIIRTLKYSVAASAAPYVQMVQPTTKFSAPRPELSSVFTSDLEMTSSANVDCNVTITPDCIRELYKMGNTFATKDPRNRLGISGYLEQYARLDDFSTFIDMFVPSLKGTTFDFKSIDGAKNEQNSSLDSVEASLDVDYAIGLSGALSTYYGTAGRGKLIPDLDQPNITENNNEPYIEQLFYLLDLPDSELPAVLSTSYGENEQSVPPTYSSVVCSLFGRLGARGVSVIFSSGDTGVGSACQSNDGKNTTKFNPIFPAACPFVTSVGGTRQINPEVAIHFSSGGFSERFARPWYQELDVRYYLGHELEKGKWDGLYNPHGRGFPDVAAQSYKFATRDHGKTIGVSGTSASAPLFAGVVSILNSIRLAHNKPRMGFLNPWLYTIGRSGFTDIVHGGSDGCTGTDMYSHLPTPYVPGASWNATKGWDPVTGLGTPNFEKLSKLVLI.

The signal sequence occupies residues 1–22; that stretch reads MVSFTLRAIGACLIGLPALITA. The propeptide at 23–202 is removed in mature form; that stretch reads APTSHVSNGF…SVFTSDLEMT (180 aa). 2 N-linked (GlcNAc...) asparagine glycosylation sites follow: N210 and N281. In terms of domain architecture, Peptidase S53 spans 212 to 600; that stretch reads TITPDCIREL…FEKLSKLVLI (389 aa). Active-site charge relay system residues include E288 and D292. N-linked (GlcNAc...) asparagine glycosylation is found at N323 and N404. Residue S504 is the Charge relay system of the active site. 4 residues coordinate Ca(2+): D546, I547, G579, and D581.

Ca(2+) serves as cofactor.

Its subcellular location is the secreted. The protein localises to the extracellular space. It carries out the reaction Release of an N-terminal tripeptide from a polypeptide.. In terms of biological role, secreted tripeptidyl-peptidase which degrades proteins at acidic pHs and is involved in virulence. This chain is Probable tripeptidyl-peptidase SED4 (SED4), found in Trichophyton verrucosum (strain HKI 0517).